A 249-amino-acid chain; its full sequence is MAMAFCPKDQYWDSSRKSCVSCALTCSQRSQRTCTDFCKFINCRKEQGRYYDHLLGACVSCDSTCTQHPQQCAHFCEKRPRSQANLQPELGRPQAGEVEVRSDNSGRHQGSEHGPGLRLSSDQLTLYCTLGVCLCAIFCCFLVALASFLRRRGEPLPSQPAGPRGSQANSPHAHRPVTEACDEVTASPQPVETCSFCFPERSSPTQESAPRSLGIHGFAGTAAPQPCMRATVGGLGVLRASTGDARPAT.

Over 1–128 (MAMAFCPKDQ…LSSDQLTLYC (128 aa)) the chain is Extracellular. TNFR-Cys repeat units follow at residues 5–38 (FCPK…TDFC) and 42–76 (NCRK…AHFC). Cystine bridges form between C6/C19, C22/C34, C26/C38, C43/C58, C61/C72, and C65/C76. Residues 86 to 116 (LQPELGRPQAGEVEVRSDNSGRHQGSEHGPG) form a disordered region. A compositionally biased stretch (basic and acidic residues) spans 98–111 (VEVRSDNSGRHQGS). Residues 129-149 (TLGVCLCAIFCCFLVALASFL) traverse the membrane as a helical; Signal-anchor for type III membrane protein segment. Over 150–249 (RRRGEPLPSQ…ASTGDARPAT (100 aa)) the chain is Cytoplasmic. The tract at residues 156–176 (LPSQPAGPRGSQANSPHAHRP) is disordered.

As to quaternary structure, binds TRAF2, TRAF5 and TRAF6. Binds the NH2-terminal domain of CAMLG with its C-terminus.

It localises to the membrane. Receptor for TNFSF13/APRIL and TNFSF13B/TALL1/BAFF/BLYS that binds both ligands with similar high affinity. Mediates calcineurin-dependent activation of NF-AT, as well as activation of NF-kappa-B and AP-1. Involved in the stimulation of B- and T-cell function and the regulation of humoral immunity. This chain is Tumor necrosis factor receptor superfamily member 13B (Tnfrsf13b), found in Mus musculus (Mouse).